The following is a 612-amino-acid chain: Pentatricopeptide repeat-containing protein At4g14050, mitochondrial (612 aa).

The transit peptide at 1-24 (MLIPHYLHQLQLCARNRTLTTAKA) directs the protein to the mitochondrion. 11 PPR repeats span residues 37 to 71 (CCPL…DHIA), 72 to 103 (WASV…GLRP), 104 to 138 (DDFV…EYAN), 139 to 169 (DEVV…IRVK), 170 to 204 (NTIS…NLYS), 205 to 235 (WTAL…RVDI), 237 to 271 (DPLV…GFDS), 272 to 302 (CVFI…MRHR), 303 to 337 (DVVS…GVKP), 338 to 373 (NEVT…GIRP), and 374 to 408 (SLQH…PDEP). Positions 409 to 485 (TWAALLSACK…DPGHSSVEVR (77 aa)) are type E motif. The tract at residues 486-516 (KETEVFYAGETSHPLKEDIFRLLKKLEEEMR) is type E(+) motif. Residues 518–612 (RNGYVPDTSW…GGKCSCNDFW (95 aa)) are type DYW motif.

It belongs to the PPR family. PCMP-H subfamily. Interacts with MORF8/RIP1 and MORF1/RIP8.

The protein localises to the mitochondrion. Functionally, involved in C-to-U editing of mitochondrial RNA. Required specifically for editing the mitochondrial NAD4, MT-CYB/COB and RPL16 transcripts. This chain is Pentatricopeptide repeat-containing protein At4g14050, mitochondrial (PCMP-H13), found in Arabidopsis thaliana (Mouse-ear cress).